We begin with the raw amino-acid sequence, 257 residues long: Mitochondrial distribution and morphology protein 12 (257 aa).

Residues 1–256 form the SMP-LTD domain; sequence MSFEINWEKL…WPSWVNLDFN (256 aa). The interval 74–98 is disordered; that stretch reads YEEDNETSSEMHGRDGQNVGESGEE.

Belongs to the MDM12 family. Component of the ER-mitochondria encounter structure (ERMES) or MDM complex, composed of MMM1, MDM10, MDM12 and MDM34. An MMM1 homodimer associates with one molecule of MDM12 on each side in a pairwise head-to-tail manner, and the SMP-LTD domains of MMM1 and MDM12 generate a continuous hydrophobic tunnel for phospholipid trafficking.

The protein localises to the mitochondrion outer membrane. It localises to the endoplasmic reticulum membrane. Its function is as follows. Component of the ERMES/MDM complex, which serves as a molecular tether to connect the endoplasmic reticulum (ER) and mitochondria. Components of this complex are involved in the control of mitochondrial shape and protein biogenesis, and function in nonvesicular lipid trafficking between the ER and mitochondria. MDM12 is required for the interaction of the ER-resident membrane protein MMM1 and the outer mitochondrial membrane-resident beta-barrel protein MDM10. The MDM12-MMM1 subcomplex functions in the major beta-barrel assembly pathway that is responsible for biogenesis of all mitochondrial outer membrane beta-barrel proteins, and acts in a late step after the SAM complex. The MDM10-MDM12-MMM1 subcomplex further acts in the TOM40-specific pathway after the action of the MDM12-MMM1 complex. Essential for establishing and maintaining the structure of mitochondria and maintenance of mtDNA nucleoids. The sequence is that of Mitochondrial distribution and morphology protein 12 from Candida glabrata (strain ATCC 2001 / BCRC 20586 / JCM 3761 / NBRC 0622 / NRRL Y-65 / CBS 138) (Yeast).